The primary structure comprises 359 residues: N-acetyl-gamma-glutamyl-phosphate reductase (359 aa).

C162 is an active-site residue.

The protein belongs to the NAGSA dehydrogenase family. Type 1 subfamily.

It localises to the cytoplasm. The enzyme catalyses N-acetyl-L-glutamate 5-semialdehyde + phosphate + NADP(+) = N-acetyl-L-glutamyl 5-phosphate + NADPH + H(+). It participates in amino-acid biosynthesis; L-arginine biosynthesis; N(2)-acetyl-L-ornithine from L-glutamate: step 3/4. Catalyzes the NADPH-dependent reduction of N-acetyl-5-glutamyl phosphate to yield N-acetyl-L-glutamate 5-semialdehyde. The sequence is that of N-acetyl-gamma-glutamyl-phosphate reductase from Prochlorococcus marinus (strain NATL2A).